A 220-amino-acid chain; its full sequence is Sericin-2 (220 aa).

2 stretches are compositionally biased toward low complexity: residues 1–131 (SSST…ASSS) and 141–155 (NESS…QNSA). Residues 1–220 (SSSTNNSSGS…SSSSSSWSSA (220 aa)) form a disordered region. Positions 156–165 (TRSQVINADG) are enriched in polar residues. The segment covering 166–220 (SQSSSSSSSSASNQASATSSSSVSADGSESESSSSSSSSSSSSSESSSSSSWSSA) has biased composition (low complexity).

In terms of tissue distribution, produced exclusively in the middle (MSG) section of silk glands.

It localises to the secreted. Functionally, provides the silk fibroin thread with a sticky coating. Acts as a cement by sticking silk threads together. The sequence is that of Sericin-2 (SER2) from Galleria mellonella (Greater wax moth).